Consider the following 183-residue polypeptide: Capsid protein (183 aa).

The disordered stretch occupies residues 136-183 (NAPILSTLPETTVVRRRGRSPRRRTPSPRRRRSQSPRRRRSQSRESQC). Residues 149 to 176 (VRRRGRSPRRRTPSPRRRRSQSPRRRRS) are compositionally biased toward basic residues. 3 positions are modified to phosphoserine; by host: S155, S162, and S170. One copy of the 1; half-length repeat lies at 155-161 (SPRRRTP). Residues 155–177 (SPRRRTPSPRRRRSQSPRRRRSQ) form a 3 X 8 AA repeats of S-P-R-R-R-[PR]-S-Q region. Residues 158 to 175 (RRTPSPRRRRSQSPRRRR) carry the Bipartite nuclear localization signal motif. 2 consecutive repeat copies span residues 162 to 169 (SPRRRRSQ) and 170 to 177 (SPRRRRSQ). Positions 177 to 183 (QSRESQC) are RNA binding.

Belongs to the orthohepadnavirus core antigen family. Homodimerizes, then multimerizes. Interacts with cytosol exposed regions of viral L glycoprotein present in the reticulum-to-Golgi compartment. Interacts with human FLNB. Phosphorylated form interacts with host importin alpha; this interaction depends on the exposure of the NLS, which itself depends upon genome maturation and/or phosphorylation of the capsid protein. Interacts with host NUP153. In terms of processing, phosphorylated by host SRPK1, SRPK2, and maybe protein kinase C or GAPDH. Phosphorylation is critical for pregenomic RNA packaging. Protein kinase C phosphorylation is stimulated by HBx protein and may play a role in transport of the viral genome to the nucleus at the late step during the viral replication cycle.

The protein resides in the virion. It localises to the host cytoplasm. Self assembles to form an icosahedral capsid. Most capsids appear to be large particles with an icosahedral symmetry of T=4 and consist of 240 copies of capsid protein, though a fraction forms smaller T=3 particles consisting of 180 capsid proteins. Entering capsids are transported along microtubules to the nucleus. Phosphorylation of the capsid is thought to induce exposure of nuclear localization signal in the C-terminal portion of the capsid protein that allows binding to the nuclear pore complex via the importin (karyopherin-) alpha and beta. Capsids are imported in intact form through the nuclear pore into the nuclear basket, where it probably binds NUP153. Only capsids that contain the mature viral genome can release the viral DNA and capsid protein into the nucleoplasm. Immature capsids get stuck in the basket. Capsids encapsulate the pre-genomic RNA and the P protein. Pre-genomic RNA is reverse-transcribed into DNA while the capsid is still in the cytoplasm. The capsid can then either be directed to the nucleus, providing more genomes for transcription, or bud through the endoplasmic reticulum to provide new virions. This is Capsid protein from Homo sapiens (Human).